A 200-amino-acid chain; its full sequence is Neutrophil gelatinase-associated lipocalin (200 aa).

Residues 1-20 (MALSVMCLGLALLGVLQSQA) form the signal peptide. Gln-21 is subject to Pyrrolidone carboxylic acid. 72–74 (YST) is an a carboxymycobactin binding site. Asn-81 and Asn-85 each carry an N-linked (GlcNAc...) asparagine glycan. The cysteines at positions 98 and 197 are disulfide-linked. Tyr-128 provides a ligand contact to enterobactin. A carboxymycobactin contacts are provided by Lys-147, Lys-156, and Tyr-160. Position 156 (Lys-156) interacts with enterobactin.

Belongs to the calycin superfamily. Lipocalin family. In terms of assembly, monomer. Homodimer; disulfide-linked. Heterodimer; disulfide-linked with MMP9. N-glycosylated. In terms of tissue distribution, expressed in the cortical tubules of the kidney (at protein level). Also expressed in the medullary tubules of the kidney. Detected in lung, spleen, uterus, vagina and epididymis.

Its subcellular location is the secreted. The protein resides in the cytoplasmic granule lumen. It is found in the cytoplasmic vesicle lumen. Iron-trafficking protein involved in multiple processes such as apoptosis, innate immunity and renal development. Binds iron through association with 2,3-dihydroxybenzoic acid (2,3-DHBA), a siderophore that shares structural similarities with bacterial enterobactin, and delivers or removes iron from the cell, depending on the context. Iron-bound form (holo-24p3) is internalized following binding to the SLC22A17 (24p3R) receptor, leading to release of iron and subsequent increase of intracellular iron concentration. In contrast, association of the iron-free form (apo-24p3) with the SLC22A17 (24p3R) receptor is followed by association with an intracellular siderophore, iron chelation and iron transfer to the extracellular medium, thereby reducing intracellular iron concentration. Involved in apoptosis due to interleukin-3 (IL3) deprivation: iron-loaded form increases intracellular iron concentration without promoting apoptosis, while iron-free form decreases intracellular iron levels, inducing expression of the proapoptotic protein BCL2L11/BIM, resulting in apoptosis. Involved in innate immunity; limits bacterial proliferation by sequestering iron bound to microbial siderophores, such as enterobactin. Can also bind siderophores from M.tuberculosis. The sequence is that of Neutrophil gelatinase-associated lipocalin (Lcn2) from Mus musculus (Mouse).